The chain runs to 132 residues: Fatty acid-binding protein, adipocyte (132 aa).

N-acetylcysteine is present on cysteine 2. Phosphoserine is present on serine 13. Tyrosine 20 carries the phosphotyrosine; by Tyr-kinases modification. Residues 22–32 (KEVGVGFATRK) carry the Nuclear localization signal motif. A fatty acid is bound at residue 127–129 (RVY).

This sequence belongs to the calycin superfamily. Fatty-acid binding protein (FABP) family. Monomer. Homodimer. Interacts with PPARG.

It localises to the cytoplasm. Its subcellular location is the nucleus. Functionally, lipid transport protein in adipocytes. Binds both long chain fatty acids and retinoic acid. Delivers long-chain fatty acids and retinoic acid to their cognate receptors in the nucleus. The polypeptide is Fatty acid-binding protein, adipocyte (Fabp4) (Mus musculus (Mouse)).